Reading from the N-terminus, the 479-residue chain is Aspartyl/glutamyl-tRNA(Asn/Gln) amidotransferase subunit B (479 aa).

It belongs to the GatB/GatE family. GatB subfamily. Heterotrimer of A, B and C subunits.

The catalysed reaction is L-glutamyl-tRNA(Gln) + L-glutamine + ATP + H2O = L-glutaminyl-tRNA(Gln) + L-glutamate + ADP + phosphate + H(+). The enzyme catalyses L-aspartyl-tRNA(Asn) + L-glutamine + ATP + H2O = L-asparaginyl-tRNA(Asn) + L-glutamate + ADP + phosphate + 2 H(+). Functionally, allows the formation of correctly charged Asn-tRNA(Asn) or Gln-tRNA(Gln) through the transamidation of misacylated Asp-tRNA(Asn) or Glu-tRNA(Gln) in organisms which lack either or both of asparaginyl-tRNA or glutaminyl-tRNA synthetases. The reaction takes place in the presence of glutamine and ATP through an activated phospho-Asp-tRNA(Asn) or phospho-Glu-tRNA(Gln). The chain is Aspartyl/glutamyl-tRNA(Asn/Gln) amidotransferase subunit B from Streptococcus uberis (strain ATCC BAA-854 / 0140J).